The chain runs to 328 residues: Delta-aminolevulinic acid dehydratase (328 aa).

Lysine 200 serves as the catalytic Schiff-base intermediate with substrate. 5-aminolevulinate is bound by residues arginine 210 and lysine 222. Mg(2+) is bound at residue glutamate 238. Lysine 253 (schiff-base intermediate with substrate) is an active-site residue. 5-aminolevulinate is bound by residues serine 279 and tyrosine 318.

This sequence belongs to the ALAD family. In terms of assembly, homooctamer.

The catalysed reaction is 2 5-aminolevulinate = porphobilinogen + 2 H2O + H(+). It participates in porphyrin-containing compound metabolism; protoporphyrin-IX biosynthesis; coproporphyrinogen-III from 5-aminolevulinate: step 1/4. With respect to regulation, stimulated by magnesium, inhibited by zinc. In terms of biological role, catalyzes an early step in the biosynthesis of tetrapyrroles. Binds two molecules of 5-aminolevulinate per subunit, each at a distinct site, and catalyzes their condensation to form porphobilinogen. In Chlorobaculum parvum (strain DSM 263 / NCIMB 8327) (Chlorobium vibrioforme subsp. thiosulfatophilum), this protein is Delta-aminolevulinic acid dehydratase (hemB).